Consider the following 2663-residue polypeptide: Ankyrin repeat domain-containing protein 11 (2663 aa).

2 disordered regions span residues 1–90 and 128–169; these read MPKG…KEPV and SANS…ERGE. Composition is skewed to basic and acidic residues over residues 21–54 and 69–90; these read MVEKQTGKKDKDKVSLTKTPKLERGDGGKEVRER and EQKDSDTEKQGPERKRIKKEPV. Residues 128 to 155 are compositionally biased toward polar residues; sequence SANSPVDTTPKHPSQSTVCQKGTPNSAS. The segment covering 156–169 has biased composition (basic and acidic residues); sequence KTKDKVNKRNERGE. 4 ANK repeats span residues 167-196, 200-229, 233-262, and 266-292; these read RGETRLHRAAIRGDARRIKELISEGADVNV, AGWTALHEACNRGYYDVAKQLLAAGAEVNT, DDDTPLHDAANNGHYKVVKLLLRYGGNPQQ, and KGETPLKVANSPTMVNLLLGKGTYTSS. S276 carries the phosphoserine modification. Disordered stretches follow at residues 289–380, 398–647, and 723–783; these read YTSS…SNSF, APKK…GQCS, and DTNK…NDLK. The span at 295–305 shows a compositional bias: acidic residues; sequence SSTESSEEEDA. Over residues 309-320 the composition is skewed to polar residues; that stretch reads APSSSVDGNNTD. Residues 356–376 are compositionally biased toward basic and acidic residues; the sequence is DRVPPVDDKHLLKKDYRKETK. S408 carries the post-translational modification Phosphoserine. T410 is subject to Phosphothreonine. S411 bears the Phosphoserine mark. Residues 438-451 show a composition bias toward basic and acidic residues; the sequence is KTREPSNAKQQKEK. Basic residues predominate over residues 452-462; the sequence is NKVKKKRKKET. Positions 463–477 are enriched in basic and acidic residues; sequence KGREVRFGKRSDKFC. The segment covering 481-493 has biased composition (acidic residues); sequence SESESSESGEDDR. The span at 513–531 shows a compositional bias: low complexity; it reads SLFSSLSASSTSSHGSSAA. Basic and acidic residues predominate over residues 539–550; the sequence is TDQHTKHWRTDN. Residues 551–562 are compositionally biased toward polar residues; the sequence is WKTISSPAWSEV. A compositionally biased stretch (low complexity) spans 576–588; it reads ESDYSSEGSSVES. Basic residues-rich tracts occupy residues 591-602 and 629-641; these read PVRKRQEHRKRA and VKKHKTKHKHKNK. At S834 the chain carries Phosphoserine. Basic and acidic residues-rich tracts occupy residues 881-928, 935-1043, 1059-1090, and 1099-1112; these read VKED…EKHK, SEKD…KSIL, KKDTKEKHKDTHGKDKERKASLDQGKEKKEKA, and FSEKKDDKKGKEKS. Disordered regions lie at residues 881–1043 and 1059–1393; these read VKED…KSIL and KKDT…GQYE. S1079 is modified (phosphoserine). T1120 carries the phosphothreonine modification. S1123 is subject to Phosphoserine. Composition is skewed to basic and acidic residues over residues 1142-1301, 1330-1347, and 1359-1393; these read DLPR…DKIS, GDDKPRESACLPEKLKEK, and KSHDRERAKKEKAEKKEKGEDYKEGGSRKDSGQYE. T1419 bears the Phosphothreonine mark. 5 stretches are compositionally biased toward basic and acidic residues: residues 1424 to 1446, 1466 to 1545, 1556 to 1574, 1587 to 1597, and 1605 to 1639; these read STEKKDKNDSEREPSKKIEKELK, REKW…KGDP, APSKDPGKKDARPREKLLG, LSQKDLEIEER, and MKQMEKLRHRSGDPKLKEKAKPADDGRKKGLDIPA. The disordered stretch occupies residues 1424–1710; that stretch reads STEKKDKNDS…TGVPTPTSVL (287 aa). S1509 is modified (phosphoserine). S1692 carries the post-translational modification Phosphoserine. The segment covering 1698-1710 has biased composition (polar residues); that stretch reads SRPTGVPTPTSVL. S1792 carries the phosphoserine modification. A disordered region spans residues 1814–1836; that stretch reads SVPAASSYDSPMPPSMEDRAPLP. The residue at position 1847 (S1847) is a Phosphoserine. Residues Y1850 and Y1851 each carry the phosphotyrosine modification. Phosphoserine is present on residues S1852, S1859, and S1990. Disordered regions lie at residues 1988 to 2019 and 2131 to 2406; these read PESPKRFCPADPLHSAAPGPFSASEAPYPAPP and LDLG…STQQ. Low complexity-rich tracts occupy residues 2310–2324 and 2391–2406; these read IQPEAAEPKPTAEAP and RSTQQLQQQLNTSTQQ. Residues 2369 to 2663 form an important for protein degradation region; it reads AKARGSEDDD…VNDDFVLLPA (295 aa).

Interacts with the PAS region of the p160 coactivators. Post-translationally, subject to proteasomal degradation which is probably essential to regulate its activity.

It localises to the nucleus. Its function is as follows. Chromatin regulator which modulates histone acetylation and gene expression in neural precursor cells. May recruit histone deacetylases (HDACs) to the p160 coactivators/nuclear receptor complex to inhibit ligand-dependent transactivation. Has a role in proliferation and development of cortical neural precursors. May also regulate bone homeostasis. This is Ankyrin repeat domain-containing protein 11 (ANKRD11) from Homo sapiens (Human).